The sequence spans 118 residues: Small ribosomal subunit protein uS13 (118 aa).

A disordered region spans residues 94–118 (SLPLRGQRTKTNARTRKGPRKPIRK).

This sequence belongs to the universal ribosomal protein uS13 family. In terms of assembly, part of the 30S ribosomal subunit. Forms a loose heterodimer with protein S19. Forms two bridges to the 50S subunit in the 70S ribosome.

Located at the top of the head of the 30S subunit, it contacts several helices of the 16S rRNA. In the 70S ribosome it contacts the 23S rRNA (bridge B1a) and protein L5 of the 50S subunit (bridge B1b), connecting the 2 subunits; these bridges are implicated in subunit movement. Contacts the tRNAs in the A and P-sites. In Shewanella violacea (strain JCM 10179 / CIP 106290 / LMG 19151 / DSS12), this protein is Small ribosomal subunit protein uS13.